The sequence spans 397 residues: Pectate lyase 2 (397 aa).

Positions 1 to 25 are cleaved as a signal peptide; sequence MGIKQCCYILYFTLALVALLQPVRS. Asn-37 carries an N-linked (GlcNAc...) asparagine glycan. Residues Cys-54 and Cys-71 are joined by a disulfide bond. Ca(2+) is bound by residues Asp-194, Asp-218, and Asp-222. Arg-274 is an active-site residue.

The protein belongs to the polysaccharide lyase 1 family. Amb a subfamily. Monomer. Requires Ca(2+) as cofactor. Post-translationally, the N-terminus is blocked. In terms of tissue distribution, pollen and flowers.

It catalyses the reaction Eliminative cleavage of (1-&gt;4)-alpha-D-galacturonan to give oligosaccharides with 4-deoxy-alpha-D-galact-4-enuronosyl groups at their non-reducing ends.. It functions in the pathway glycan metabolism; pectin degradation; 2-dehydro-3-deoxy-D-gluconate from pectin: step 2/5. In terms of biological role, has pectate lyase activity. The polypeptide is Pectate lyase 2 (Ambrosia artemisiifolia (Common ragweed)).